Reading from the N-terminus, the 602-residue chain is Trichothecene efflux pump TRI12 (602 aa).

A run of 4 helical transmembrane segments spans residues Leu-49–Ile-69, Asn-77–Gly-97, Gly-107–Phe-127, and Ile-134–Ile-154. Asn-160 carries N-linked (GlcNAc...) asparagine glycosylation. The next 11 membrane-spanning stretches (helical) occupy residues Phe-164–Ile-184, Trp-196–Tyr-216, Trp-240–Gly-260, Ile-271–Tyr-291, Pro-297–Ile-317, Ser-355–Phe-375, Trp-380–Asn-400, Ile-408–Leu-428, Ala-450–Gly-470, Trp-484–Gln-504, and Ala-532–Ala-552. Asn-590 carries an N-linked (GlcNAc...) asparagine glycan.

The protein belongs to the major facilitator superfamily.

It localises to the cell membrane. In terms of biological role, efflux pump that provides the dual role of trichothecene export and self-protection by allowing the fungus to evade the harmful effect of its own trichothecene production. The polypeptide is Trichothecene efflux pump TRI12 (Trichoderma arundinaceum).